A 910-amino-acid chain; its full sequence is E3 ubiquitin-protein ligase HUL5 (910 aa).

The residue at position 1 (M1) is an N-acetylmethionine. The tract at residues 1–25 (MLNFTGQTRRRNVNLGNRTRNSKKD) is disordered. In terms of domain architecture, HECT spans 810–910 (YGGYKEEDQT…INSGARFDLS (101 aa)). C878 (glycyl thioester intermediate) is an active-site residue.

This sequence belongs to the UBE3C family. In terms of assembly, interacts with 19S proteasomes.

Its subcellular location is the cytoplasm. The protein localises to the cytosol. The protein resides in the nucleus. It carries out the reaction S-ubiquitinyl-[E2 ubiquitin-conjugating enzyme]-L-cysteine + [acceptor protein]-L-lysine = [E2 ubiquitin-conjugating enzyme]-L-cysteine + N(6)-ubiquitinyl-[acceptor protein]-L-lysine.. Its pathway is protein modification; protein ubiquitination. Non-essential E3 ubiquitin-protein ligase that specifically catalyzes 'Lys-29'- and 'Lys-48'-linked polyubiquitin chains. Accepts ubiquitin from an E2 ubiquitin-conjugating enzyme in the form of a thioester and then directly transfers the ubiquitin to targeted substrates. Associates with the proteasome and promotes elongation of ubiquitin chains on substrates bound to the proteasome. Elongation of ubiquitin chains on substrates bound to the proteasome promotes proteasomal processivity. Also promotes ubiquitin elongation of 26S proteasome subunit RPN10. Involved in the stress response required to maintain cell fitness following heat-shock: acts by mediating ubiquitination of cytosolic misfolded proteins, leading to their subsequent degradation. The chain is E3 ubiquitin-protein ligase HUL5 from Saccharomyces cerevisiae (strain ATCC 204508 / S288c) (Baker's yeast).